The following is a 98-amino-acid chain: Large ribosomal subunit protein uL23 (98 aa).

It belongs to the universal ribosomal protein uL23 family. As to quaternary structure, part of the 50S ribosomal subunit. Contacts protein L29, and trigger factor when it is bound to the ribosome.

Its function is as follows. One of the early assembly proteins it binds 23S rRNA. One of the proteins that surrounds the polypeptide exit tunnel on the outside of the ribosome. Forms the main docking site for trigger factor binding to the ribosome. The polypeptide is Large ribosomal subunit protein uL23 (Hahella chejuensis (strain KCTC 2396)).